A 24-amino-acid polypeptide reads, in one-letter code: KFGKVLKFLAKTLAKHLAKKQAQS.

Expressed by the venom gland.

It is found in the secreted. In Cupiennius salei (American wandering spider), this protein is Cupiennin-5a.